The sequence spans 315 residues: Glutamyl-Q tRNA(Asp) synthetase (315 aa).

Residues 23–27 and Glu59 contribute to the L-glutamate site; that span reads RFAPS. The 'HIGH' region signature appears at 26–36; the sequence is PSPTGPLHIGS. Zn(2+) is bound by residues Cys115, Cys117, Tyr142, and Cys146. Positions 202 and 220 each coordinate L-glutamate. Residues 258-262 carry the 'KMSKS' region motif; it reads KLSKQ. Lys261 contributes to the ATP binding site.

This sequence belongs to the class-I aminoacyl-tRNA synthetase family. GluQ subfamily. Requires Zn(2+) as cofactor.

Its function is as follows. Catalyzes the tRNA-independent activation of glutamate in presence of ATP and the subsequent transfer of glutamate onto a tRNA(Asp). Glutamate is transferred on the 2-amino-5-(4,5-dihydroxy-2-cyclopenten-1-yl) moiety of the queuosine in the wobble position of the QUC anticodon. This Ralstonia nicotianae (strain ATCC BAA-1114 / GMI1000) (Ralstonia solanacearum) protein is Glutamyl-Q tRNA(Asp) synthetase.